The following is a 106-amino-acid chain: Large ribosomal subunit protein eL42A (106 aa).

N6-methyllysine; by RKM3 is present on K40. The residue at position 55 (K55) is an N6-methyllysine; by RKM4.

Belongs to the eukaryotic ribosomal protein eL42 family. As to quaternary structure, component of the large ribosomal subunit (LSU). Mature yeast ribosomes consist of a small (40S) and a large (60S) subunit. The 40S small subunit contains 1 molecule of ribosomal RNA (18S rRNA) and 33 different proteins (encoded by 57 genes). The large 60S subunit contains 3 rRNA molecules (25S, 5.8S and 5S rRNA) and 46 different proteins (encoded by 81 genes). In wild-type cells, 78% of L42 is monomethylated at both Lys-40 and Lys-55, and 22% are a mixture of species with either residue monomethylated.

It is found in the cytoplasm. In terms of biological role, component of the ribosome, a large ribonucleoprotein complex responsible for the synthesis of proteins in the cell. The small ribosomal subunit (SSU) binds messenger RNAs (mRNAs) and translates the encoded message by selecting cognate aminoacyl-transfer RNA (tRNA) molecules. The large subunit (LSU) contains the ribosomal catalytic site termed the peptidyl transferase center (PTC), which catalyzes the formation of peptide bonds, thereby polymerizing the amino acids delivered by tRNAs into a polypeptide chain. The nascent polypeptides leave the ribosome through a tunnel in the LSU and interact with protein factors that function in enzymatic processing, targeting, and the membrane insertion of nascent chains at the exit of the ribosomal tunnel. This Saccharomyces cerevisiae (strain ATCC 204508 / S288c) (Baker's yeast) protein is Large ribosomal subunit protein eL42A.